Consider the following 138-residue polypeptide: Large ribosomal subunit protein uL16 (138 aa).

The interval 1-22 is disordered; sequence MQQPARTKYRKQQKGRNKGIAT. Positions 7 to 17 are enriched in basic residues; it reads TKYRKQQKGRN.

It belongs to the universal ribosomal protein uL16 family. As to quaternary structure, part of the 50S ribosomal subunit.

Binds 23S rRNA and is also seen to make contacts with the A and possibly P site tRNAs. The chain is Large ribosomal subunit protein uL16 from Nitrosospira multiformis (strain ATCC 25196 / NCIMB 11849 / C 71).